The chain runs to 826 residues: MEGHTDMEILRTVKGSSTGEVNVHLVARDSAGPHPQLPTTAFIIPTNAATLGLPSTALDVPYPREPVHVGALERVAGSEPVTATILPQLSTGTGTNSTVRLLDWTGVSAPLPGSGMRFRINEYAPLNMIGVERPRSPEQRHEGGMARRDAGIQHPDVHQDRQDITSLEPPVDASSCKCQACGPQQSSGLDVGSSGDRCSQPFQKRSVIVENSGCTIASELLKPMKKRKHKEYQSPSEESEPEAVKQGEGKDAEREPTPSTPENEEWSRSQLVSSEKKDGWSWESYLEEQKAVTAPVSLFQDSQAVTHNKNGFKLGMKLEGIDPQHPSMYFILTVAEVCGYRLRLHFDGYSECHDFWVNANSPDIHPAGWFEKTGHKLQLPKGYKEEEFSWSQYLRSTKAQAAPKHLFVSQSHSTPPVGFQVGMKLEAVDRMNPSLVCVASVTDVVDSRFLVHFDDWGDTYDYWCDPSSPYIHPVGWCQKQGKPLTPPQDYPDPDSFCWEKYLEETGTSAVPNWAFKVRPPHSFLVNMKLEAVDRRNPALIRVASVEDVEDHRIKLHFDGWSHNYDFWIDADHPDIHPAGWCSKTGHPLEPPLRPRESSSVSPGGCPPLSHRSPPHTKTSKYNFHHRKCPTPGCDGSGHVTGKFTAHHCLSGCPLAEKNQSRLKAELSDSETAARKKNPSNLSPRKKPRHQGRIGRPPKYRKIPEEDLQALPPSVVHQSLFMSTLPTHADRPLSVCWEQHCKLLPGVAGISASTVSKWTIEEVFGFVQTLTGSEDQARLFKDEMIDGEAFLLLTQADIVKIMSVKLGPALKIYNAILMFKNTDDAFK.

Serine 136 is modified (phosphoserine). 2 disordered regions span residues 167–197 and 220–271; these read LEPP…SGDR and LLKP…RSQL. A compositionally biased stretch (basic and acidic residues) spans 242 to 256; that stretch reads EAVKQGEGKDAEREP. MBT repeat units lie at residues 280–380, 388–487, and 496–591; these read WSWE…LQLP, FSWS…LTPP, and FCWE…LEPP. The tract at residues 453-460 is interaction with monomethylated and dimethylated peptides; the sequence is FDDWGDTY. Positions 586-621 are disordered; it reads HPLEPPLRPRESSSVSPGGCPPLSHRSPPHTKTSKY. A compositionally biased stretch (basic residues) spans 612 to 621; the sequence is SPPHTKTSKY. A CCHHC-type zinc finger spans residues 619-662; sequence SKYNFHHRKCPTPGCDGSGHVTGKFTAHHCLSGCPLAEKNQSRL. Residues cysteine 628, cysteine 633, histidine 646, and cysteine 652 each contribute to the Zn(2+) site. Residues 663–699 form a disordered region; that stretch reads KAELSDSETAARKKNPSNLSPRKKPRHQGRIGRPPKY. The segment covering 683 to 699 has biased composition (basic residues); the sequence is PRKKPRHQGRIGRPPKY. The region spanning 757-821 is the SAM domain; sequence WTIEEVFGFV…YNAILMFKNT (65 aa).

In terms of assembly, homodimer. Interacts with RB1/RB (when monomethylated at 'Lys-860'). Interacts with p53/TP53 (when monomethylated at 'Lys-382'). Interacts with CBX3, ETV6, KMT5A and VCP/p97. In terms of processing, ubiquitinated in a VCP/p97-dependent way following DNA damage, leading to its removal from DNA damage sites, promoting accessibility of H4K20me2 mark for DNA repair protein TP53BP1, which is then recruited to DNA damage sites. Highly expressed in brain, testis, eyes, and ES cells.

Its subcellular location is the nucleus. Functionally, polycomb group (PcG) protein that specifically recognizes and binds mono- and dimethyllysine residues on target proteins, thereby acting as a 'reader' of a network of post-translational modifications. PcG proteins maintain the transcriptionally repressive state of genes: acts as a chromatin compaction factor by recognizing and binding mono- and dimethylated histone H1b/H1-4 at 'Lys-26' (H1bK26me1 and H1bK26me2) and histone H4 at 'Lys-20' (H4K20me1 and H4K20me2), leading to condense chromatin and repress transcription. Recognizes and binds p53/TP53 monomethylated at 'Lys-382', leading to repress p53/TP53-target genes. Also recognizes and binds RB1/RB monomethylated at 'Lys-860'. Participates in the ETV6-mediated repression. Probably plays a role in cell proliferation. Overexpression induces multinucleated cells, suggesting that it is required to accomplish normal mitosis. In Mus musculus (Mouse), this protein is Lethal(3)malignant brain tumor-like protein 1 (L3mbtl1).